A 239-amino-acid chain; its full sequence is tRNA (guanine-N(7)-)-methyltransferase (239 aa).

S-adenosyl-L-methionine is bound by residues Gly-64, 87-88 (EI), 120-121 (NA), and Leu-140. The active site involves Asp-143. S-adenosyl-L-methionine is bound at residue 218-220 (SEE).

The protein belongs to the class I-like SAM-binding methyltransferase superfamily. TrmB family.

It is found in the nucleus. The catalysed reaction is guanosine(46) in tRNA + S-adenosyl-L-methionine = N(7)-methylguanosine(46) in tRNA + S-adenosyl-L-homocysteine. The protein operates within tRNA modification; N(7)-methylguanine-tRNA biosynthesis. Catalyzes the formation of N(7)-methylguanine at position 46 (m7G46) in tRNA. This chain is tRNA (guanine-N(7)-)-methyltransferase, found in Culex quinquefasciatus (Southern house mosquito).